Consider the following 842-residue polypeptide: Netrin receptor UNC5A (842 aa).

The first 25 residues, 1 to 25 (MAVRPGLWPALLGIVLAAWLRGSGA), serve as a signal peptide directing secretion. Topologically, residues 26 to 306 (QQSATVANPV…ASGPEDVALY (281 aa)) are extracellular. In terms of domain architecture, Ig-like spans 44-141 (PHFLVEPEDV…SGTTKSQKAY (98 aa)). 3 cysteine pairs are disulfide-bonded: C65–C126, C77–C124, and C170–C221. Residues N107 and N218 are each glycosylated (N-linked (GlcNAc...) asparagine). The Ig-like C2-type domain occupies 155 to 234 (PLAKEVSLEQ…NIVARRRSAS (80 aa)). The 53-residue stretch at 242-294 (DGSWSPWSKWSACGLDCTHWRSRECSDPAPRNGGEECQGTDLDTRNCTSDLCV) folds into the TSP type-1 domain. 3 C-linked (Man) tryptophan glycosylation sites follow: W245, W248, and W251. Intrachain disulfides connect C254-C288, C258-C293, and C266-C278. N287 carries N-linked (GlcNAc...) asparagine glycosylation. The helical transmembrane segment at 307 to 327 (VGLIAVAVCLVLLLLVLILVY) threads the bilayer. Residues 328-842 (CRKKEGLDSD…GLFTVSEAEC (515 aa)) are Cytoplasmic-facing. Residues 441–584 (NMTYGTFNFL…LGRFALVGEA (144 aa)) enclose the ZU5 domain. The interval 605–623 (SLEYNIRVYCLHDTHDALK) is interaction with DCC. Residues 761–841 (QKIISSLDPP…AGLFTVSEAE (81 aa)) enclose the Death domain.

Belongs to the unc-5 family. In terms of assembly, homodimer and homooligomer. Interacts with the cytoplasmic part of DCC. Interacts with MAGED1. Interacts with PRKCABP, possibly mediating some interaction with PKC. Interacts (via extracellular domain) with FLRT2 (via extracellular domain). Interacts (via extracellular domain) with FLRT3 (via extracellular domain). Phosphorylated on cytoplasmic tyrosine residues. Phosphorylated by PKC in vitro. Post-translationally, proteolytically cleaved by caspases during apoptosis. The cleavage does not take place when the receptor is associated with netrin ligand. Its cleavage by caspases is required to induce apoptosis. In terms of processing, the two extracellular TSRs of UNC5A contain WxxWxxWxxC motifs that can be C-mannosylated on all tryptophans. DPY19L1 preferentially mannosylates the first two tryptophans and DPY19L3 prefers the third. C-mannosylation by DPY19L1 is required for transport of UNC5A from the endoplasmic reticulum to the cell surface.

The protein localises to the cell membrane. Its subcellular location is the membrane raft. It localises to the cell projection. It is found in the neuron projection. In terms of biological role, receptor for netrin required for axon guidance. Functions in the netrin signaling pathway and promotes neurite outgrowth in response to NTN1. Mediates axon repulsion of neuronal growth cones in the developing nervous system in response to netrin. Axon repulsion in growth cones may be mediated by its association with DCC that may trigger signaling for repulsion. It also acts as a dependence receptor required for apoptosis induction when not associated with netrin ligand. The sequence is that of Netrin receptor UNC5A (UNC5A) from Homo sapiens (Human).